Here is an 825-residue protein sequence, read N- to C-terminus: Taste receptor cell protein 1 (825 aa).

A signal peptide spans 1 to 21; sequence MDKQWFPAAGILLAALLVVSA. 2 disordered regions span residues 66–97 and 299–322; these read EREP…GPSG and TSPS…SASP. The span at 302–322 shows a compositional bias: low complexity; that stretch reads SQASSLHSPRPSSASPLSASP.

Expression is restricted to circumvallate papillae.

The sequence is that of Taste receptor cell protein 1 (Trcg1) from Mus musculus (Mouse).